Consider the following 197-residue polypeptide: Molybdenum cofactor guanylyltransferase (197 aa).

Residues 10–12 (LAG), K23, N51, D69, and D99 each bind GTP. Position 99 (D99) interacts with Mg(2+).

Belongs to the MobA family. As to quaternary structure, monomer. Requires Mg(2+) as cofactor.

It is found in the cytoplasm. It carries out the reaction Mo-molybdopterin + GTP + H(+) = Mo-molybdopterin guanine dinucleotide + diphosphate. Its function is as follows. Transfers a GMP moiety from GTP to Mo-molybdopterin (Mo-MPT) cofactor (Moco or molybdenum cofactor) to form Mo-molybdopterin guanine dinucleotide (Mo-MGD) cofactor. This is Molybdenum cofactor guanylyltransferase from Shewanella sp. (strain MR-4).